We begin with the raw amino-acid sequence, 487 residues long: Bifunctional cytokinin biosynthesis protein (487 aa).

The segment at 1 to 266 (MESTNRFMIG…RMASDFCYAS (266 aa)) is adenylate isopentenyltransferase. The cytokinin riboside 5'-monophosphate phosphoribohydrolase stretch occupies residues 267-487 (TSISFHPINE…FSRKGELEWV (221 aa)). Substrate is bound by residues Glu352, 380–381 (RK), 403–409 (GYGTLEE), and Thr415.

It in the N-terminal section; belongs to the IPP transferase family. The protein in the C-terminal section; belongs to the LOG family.

It carries out the reaction dimethylallyl diphosphate + AMP = N(6)-(dimethylallyl)adenosine 5'-phosphate + diphosphate. The enzyme catalyses N(6)-(dimethylallyl)adenosine 5'-phosphate + H2O = N(6)-dimethylallyladenine + D-ribose 5-phosphate. The catalysed reaction is 9-ribosyl-trans-zeatin 5'-phosphate + H2O = trans-zeatin + D-ribose 5-phosphate. It participates in secondary metabolite biosynthesis. Its function is as follows. Bifunctional cytokinin synthesis protein; part of the gene cluster that mediates the biosynthesis of cytokinins such as fusatin, fusatinic acids or 8-oxofusatin, known for their growth promoting and anti-senescence activities toward host plants. FCK1 is a bifunctional enzyme that performs the first steps in the biosynthesis of Fusarium cytokinins. It first condenses adenosine monophosphate (AMP) with dimethylallyl diphosphate (DMAPP) to yield isoprenyl adenosine monophosphate. It then catalyzes the removal of the phosphoribose to produce isopentenylaldehyde. The cytochrome P450 monooxygenase then converts isopentenylaldehyde to trans-zeatin. A condensation step converts trans-zeatin to fusatin which is further modified to produce fusatinic acid. The mechanism for oxidation of fusatin to fusatinic acid remains unknown. 8-oxofusatin could be produced through several pathways, via direct oxygenation of fusatin, or via the 8-oxo-pentenyladenine intermediate which itself must arise from either the prenylation of 8-oxo-AMP by FCK1 and/or oxygenation of isopentenylaldehyde. Both the FCK3 and FCK4 enzymes act downstream of the identified cytokinins to produce yet unidentified compounds. In Fusarium pseudograminearum (strain CS3096) (Wheat and barley crown-rot fungus), this protein is Bifunctional cytokinin biosynthesis protein.